The following is a 237-amino-acid chain: Ribonuclease PH (237 aa).

Phosphate contacts are provided by residues arginine 86 and 124 to 126 (GTR).

The protein belongs to the RNase PH family. As to quaternary structure, homohexameric ring arranged as a trimer of dimers.

It carries out the reaction tRNA(n+1) + phosphate = tRNA(n) + a ribonucleoside 5'-diphosphate. Functionally, phosphorolytic 3'-5' exoribonuclease that plays an important role in tRNA 3'-end maturation. Removes nucleotide residues following the 3'-CCA terminus of tRNAs; can also add nucleotides to the ends of RNA molecules by using nucleoside diphosphates as substrates, but this may not be physiologically important. Probably plays a role in initiation of 16S rRNA degradation (leading to ribosome degradation) during starvation. The protein is Ribonuclease PH of Shewanella loihica (strain ATCC BAA-1088 / PV-4).